The chain runs to 38 residues: Large ribosomal subunit protein bL36A (38 aa).

It belongs to the bacterial ribosomal protein bL36 family.

This Pectobacterium atrosepticum (strain SCRI 1043 / ATCC BAA-672) (Erwinia carotovora subsp. atroseptica) protein is Large ribosomal subunit protein bL36A.